We begin with the raw amino-acid sequence, 471 residues long: Glutamate--tRNA ligase (471 aa).

The 'HIGH' region signature appears at 9–19 (PSPTGYLHVGG). Zn(2+)-binding residues include cysteine 98, cysteine 100, cysteine 125, and aspartate 127. The short motif at 237–241 (KLSKR) is the 'KMSKS' region element. Lysine 240 lines the ATP pocket.

It belongs to the class-I aminoacyl-tRNA synthetase family. Glutamate--tRNA ligase type 1 subfamily. As to quaternary structure, monomer. It depends on Zn(2+) as a cofactor.

It localises to the cytoplasm. It carries out the reaction tRNA(Glu) + L-glutamate + ATP = L-glutamyl-tRNA(Glu) + AMP + diphosphate. Functionally, catalyzes the attachment of glutamate to tRNA(Glu) in a two-step reaction: glutamate is first activated by ATP to form Glu-AMP and then transferred to the acceptor end of tRNA(Glu). The protein is Glutamate--tRNA ligase of Yersinia pestis.